Reading from the N-terminus, the 103-residue chain is Large ribosomal subunit protein bL21 (103 aa).

It belongs to the bacterial ribosomal protein bL21 family. As to quaternary structure, part of the 50S ribosomal subunit. Contacts protein L20.

Functionally, this protein binds to 23S rRNA in the presence of protein L20. The chain is Large ribosomal subunit protein bL21 from Haemophilus influenzae (strain ATCC 51907 / DSM 11121 / KW20 / Rd).